Reading from the N-terminus, the 166-residue chain is Large ribosomal subunit protein uL11z (166 aa).

The protein belongs to the universal ribosomal protein uL11 family.

Its function is as follows. Binds directly to 26S ribosomal RNA. The sequence is that of Large ribosomal subunit protein uL11z (RPL12A) from Arabidopsis thaliana (Mouse-ear cress).